We begin with the raw amino-acid sequence, 186 residues long: Elongation factor P (186 aa).

Belongs to the elongation factor P family.

The protein resides in the cytoplasm. The protein operates within protein biosynthesis; polypeptide chain elongation. Functionally, involved in peptide bond synthesis. Stimulates efficient translation and peptide-bond synthesis on native or reconstituted 70S ribosomes in vitro. Probably functions indirectly by altering the affinity of the ribosome for aminoacyl-tRNA, thus increasing their reactivity as acceptors for peptidyl transferase. In Prochlorococcus marinus (strain MIT 9515), this protein is Elongation factor P.